The primary structure comprises 265 residues: uncharacterized protein (265 aa).

CBS domains follow at residues 9–64 (MTKK…EKVE) and 67–126 (MTKR…TTPK).

This is an uncharacterized protein from Methanocaldococcus jannaschii (strain ATCC 43067 / DSM 2661 / JAL-1 / JCM 10045 / NBRC 100440) (Methanococcus jannaschii).